The following is a 113-amino-acid chain: uncharacterized protein (113 aa).

Positions Cys28–Glu55 are disordered.

This is an uncharacterized protein from Human cytomegalovirus (strain AD169) (HHV-5).